The following is a 115-amino-acid chain: Probable malate:quinone oxidoreductase (115 aa).

Residues 88 to 115 form a disordered region; the sequence is QMPAAAPTATAKPAETPREASPQHDMAL. The span at 90–101 shows a compositional bias: low complexity; sequence PAAAPTATAKPA. The segment covering 102–115 has biased composition (basic and acidic residues); the sequence is ETPREASPQHDMAL.

This sequence belongs to the MQO family. Requires FAD as cofactor.

The catalysed reaction is (S)-malate + a quinone = a quinol + oxaloacetate. It participates in carbohydrate metabolism; tricarboxylic acid cycle; oxaloacetate from (S)-malate (quinone route): step 1/1. The protein is Probable malate:quinone oxidoreductase (mqo) of Klebsiella pneumoniae.